Consider the following 401-residue polypeptide: Putative F-box/FBD/LRR-repeat protein At3g23955 (401 aa).

Residues Val56–Ser102 enclose the F-box domain. LRR repeat units follow at residues Ile128–Lys152 and Met275–Ser296. One can recognise an FBD domain in the interval Ile321–Leu373.

This is Putative F-box/FBD/LRR-repeat protein At3g23955 from Arabidopsis thaliana (Mouse-ear cress).